A 403-amino-acid chain; its full sequence is Putative queuine tRNA-ribosyltransferase (403 aa).

The Proton acceptor role is filled by aspartate 91. Substrate contacts are provided by residues 91–95 (DSGGF), aspartate 177, glutamine 218, and glycine 245. An RNA binding region spans residues 275 to 281 (GIGAIED). Aspartate 294 serves as the catalytic Nucleophile. The segment at 299–303 (ARWAR) is RNA binding; important for wobble base 34 recognition. The Zn(2+) site is built by cysteine 341, cysteine 343, cysteine 346, and histidine 372.

This sequence belongs to the queuine tRNA-ribosyltransferase family. In terms of assembly, homodimer. Within each dimer, one monomer is responsible for RNA recognition and catalysis, while the other monomer binds to the replacement base PreQ1. Zn(2+) serves as cofactor.

It catalyses the reaction 7-aminomethyl-7-carbaguanine + guanosine(34) in tRNA = 7-aminomethyl-7-carbaguanosine(34) in tRNA + guanine. Catalyzes the base-exchange of a guanine (G) residue with the queuine precursor 7-aminomethyl-7-deazaguanine (PreQ1) at position 34 (anticodon wobble position) in tRNAs with GU(N) anticodons (tRNA-Asp, -Asn, -His and -Tyr). Catalysis occurs through a double-displacement mechanism. The nucleophile active site attacks the C1' of nucleotide 34 to detach the guanine base from the RNA, forming a covalent enzyme-RNA intermediate. The proton acceptor active site deprotonates the incoming PreQ1, allowing a nucleophilic attack on the C1' of the ribose to form the product. After dissociation, two additional enzymatic reactions on the tRNA convert PreQ1 to queuine (Q), resulting in the hypermodified nucleoside queuosine (7-(((4,5-cis-dihydroxy-2-cyclopenten-1-yl)amino)methyl)-7-deazaguanosine). The polypeptide is Putative queuine tRNA-ribosyltransferase (Archaeoglobus fulgidus (strain ATCC 49558 / DSM 4304 / JCM 9628 / NBRC 100126 / VC-16)).